We begin with the raw amino-acid sequence, 359 residues long: Phospho-N-acetylmuramoyl-pentapeptide-transferase (359 aa).

10 consecutive transmembrane segments (helical) span residues 3–23, 55–75, 80–100, 117–137, 156–176, 187–207, 231–251, 255–275, 280–300, and 334–354; these read LILI…PALI, VAIL…GMAM, PSAS…VGFI, TAKT…ALQF, IATV…VVSA, LDGL…LITF, LALV…WNAA, IFMG…ISVT, ILAV…VVQI, and FWLL…GEWL.

This sequence belongs to the glycosyltransferase 4 family. MraY subfamily. The cofactor is Mg(2+).

It localises to the cell membrane. It catalyses the reaction UDP-N-acetyl-alpha-D-muramoyl-L-alanyl-gamma-D-glutamyl-meso-2,6-diaminopimeloyl-D-alanyl-D-alanine + di-trans,octa-cis-undecaprenyl phosphate = di-trans,octa-cis-undecaprenyl diphospho-N-acetyl-alpha-D-muramoyl-L-alanyl-D-glutamyl-meso-2,6-diaminopimeloyl-D-alanyl-D-alanine + UMP. The protein operates within cell wall biogenesis; peptidoglycan biosynthesis. Functionally, catalyzes the initial step of the lipid cycle reactions in the biosynthesis of the cell wall peptidoglycan: transfers peptidoglycan precursor phospho-MurNAc-pentapeptide from UDP-MurNAc-pentapeptide onto the lipid carrier undecaprenyl phosphate, yielding undecaprenyl-pyrophosphoryl-MurNAc-pentapeptide, known as lipid I. The polypeptide is Phospho-N-acetylmuramoyl-pentapeptide-transferase (Mycolicibacterium smegmatis (strain ATCC 700084 / mc(2)155) (Mycobacterium smegmatis)).